The sequence spans 580 residues: MAQSQLAKGSRQTTGRPFQNKPARAARRLVIRAADAKEIVFDQESRRRLQAGINKVADAVGVTLGPRGRNVVLEQKFGVPQVINDGVSIRRAIELKDPVENAGAQLIKEVAGRTNDAAGDGTTTASVLAREMIHYGLQSVTAGANPIAVKRGLDKTAEYLVAKLKEHAKPVKGRDDIKNVASISAGNDNAIGEMIADALDKVGSNGVLSIETSNSTETVVEVQEGMEIDRGYISPQFVTNQERLLVEYDNCRVLVTDQKIDAIRDIIPILEQVTRLNAPLLIIAEDVSGEALATLVVNKLRGVLNVCAIKAPGFGERRKSLLQDIAIVTGAEFIAKDLGMKVEQAVVEQLGVARKVTVANNTTTLIADAASKDEIEMRIAQLKKELAETDSVYDTEKLSERIAKLSGGVAVIKVGAATEAELEDRKLRIEDAKNATFAAVEEGIVPGGGAALLHLSELVPAFKETLTDAEEKLGADIVMKSLRAPCRLIADNAGVEGEVIVQRLLGKPFEVGYNAMIDKVENLLDAGVIDPAKVTRNGLLNSVSIAGIMLTTQAVMVEKHKPSEIPGGMTASGMPSGMTI.

Over residues 1-17 (MAQSQLAKGSRQTTGRP) the composition is skewed to polar residues. The disordered stretch occupies residues 1 to 24 (MAQSQLAKGSRQTTGRPFQNKPAR).

It belongs to the chaperonin (HSP60) family. As to quaternary structure, oligomer of probably six alpha and six beta subunits.

It localises to the plastid. Its subcellular location is the chloroplast. This protein binds RuBisCO small and large subunits and is implicated in the assembly of the enzyme oligomer. The protein is RuBisCO large subunit-binding protein subunit alpha, chloroplastic of Chlamydomonas reinhardtii (Chlamydomonas smithii).